The primary structure comprises 358 residues: Src kinase-associated phosphoprotein 2 (358 aa).

Phosphoserine occurs at positions 5 and 6. The segment at 62-88 (ESQDKGDAEDGEEYDDPFAGPPDTISL) is disordered. Y75 is modified (phosphotyrosine). Phosphoserine occurs at positions 87 and 90. The region spanning 116–219 (FVLKAGYLEK…WVQQLNFVLQ (104 aa)) is the PH domain. Y151 and Y197 each carry phosphotyrosine. S223 carries the phosphoserine modification. A disordered region spans residues 232–254 (ERGELYDDVDHPLPSSSPTRSLP). Residues 243–253 (PLPSSSPTRSL) show a composition bias toward low complexity. The residue at position 260 (Y260) is a Phosphotyrosine. Residues S282 and S285 each carry the phosphoserine modification. The SH3 domain maps to 296–357 (NYANFYQGLW…PKAYVMEMYD (62 aa)).

Belongs to the SKAP family. In terms of assembly, interacts with FYB1, which is required for SKAP2 protein stability. Interacts with PTPNS1. Part of a complex consisting of SKAP2, FYB1 and PTPNS1. Part of a complex consisting of SKAP2, FYB1 and LILRB3. Interacts with LAT, GRB2, PTK2B and PRAM1. May interact with actin. May interact with FYN, HCK and LYN. Interacts with FASLG.

Its subcellular location is the cytoplasm. Its function is as follows. May be involved in B-cell and macrophage adhesion processes. In B-cells, may act by coupling the B-cell receptor (BCR) to integrin activation. May play a role in src signaling pathway. This chain is Src kinase-associated phosphoprotein 2 (SKAP2), found in Bos taurus (Bovine).